Consider the following 292-residue polypeptide: Nitrogenase iron protein 2 (292 aa).

ATP is bound at residue G8–S15. C106 serves as a coordination point for [4Fe-4S] cluster. The residue at position 109 (R109) is an ADP-ribosylarginine; by dinitrogenase reductase ADP-ribosyltransferase. Residue C142 participates in [4Fe-4S] cluster binding.

The protein belongs to the NifH/BchL/ChlL family. Homodimer. [4Fe-4S] cluster serves as cofactor. The reversible ADP-ribosylation of Arg-109 inactivates the nitrogenase reductase and regulates nitrogenase activity.

The catalysed reaction is N2 + 8 reduced [2Fe-2S]-[ferredoxin] + 16 ATP + 16 H2O = H2 + 8 oxidized [2Fe-2S]-[ferredoxin] + 2 NH4(+) + 16 ADP + 16 phosphate + 6 H(+). The key enzymatic reactions in nitrogen fixation are catalyzed by the nitrogenase complex, which has 2 components: the iron protein and the molybdenum-iron protein. This is Nitrogenase iron protein 2 (nifH2) from Methanothermococcus thermolithotrophicus (Methanococcus thermolithotrophicus).